The primary structure comprises 84 residues: Transcriptional regulator WhiB1 (84 aa).

The 63-residue stretch at 8-70 folds into the 4Fe-4S Wbl-type domain; that stretch reads VCRDEDPELF…GGMSEDERRA (63 aa). [4Fe-4S] cluster contacts are provided by C9, C37, C40, and C46.

The protein belongs to the WhiB family. In terms of assembly, homodimer. Requires [4Fe-4S] cluster as cofactor. Post-translationally, the Fe-S cluster can be nitrosylated by nitric oxide (NO). In terms of processing, upon Fe-S cluster removal intramolecular disulfide bonds are formed.

Its subcellular location is the cytoplasm. Acts as a transcriptional regulator. Probably redox-responsive. The apo- but not holo-form probably binds DNA. This is Transcriptional regulator WhiB1 (whiB1) from Mycobacterium tuberculosis (strain CDC 1551 / Oshkosh).